A 627-amino-acid chain; its full sequence is (-)-alpha-pinene synthase 1, chloroplastic (627 aa).

Residues 1 to 36 constitute a chloroplast transit peptide; it reads MALVSIAPLASKSCLHKSLSSSAHELKTICRTIPTL. Positions 378, 382, and 530 each coordinate Mg(2+). Residues 378–382 carry the DDXXD motif motif; that stretch reads DDMYD.

It belongs to the terpene synthase family. Tpsd subfamily. It depends on Mg(2+) as a cofactor. Requires Mn(2+) as cofactor.

It is found in the plastid. Its subcellular location is the chloroplast. The catalysed reaction is (2E)-geranyl diphosphate = (1S,5S)-beta-pinene + diphosphate. It catalyses the reaction (2E)-geranyl diphosphate = (1S,5S)-alpha-pinene + diphosphate. It participates in terpene metabolism; oleoresin biosynthesis. In terms of biological role, terpene synthase (TPS) involved in the biosynthesis of monoterpene natural products included in conifer oleoresin secretions and volatile emissions; these compounds contribute to biotic and abiotic stress defense against herbivores and pathogens. Catalyzes the conversion of (2E)-geranyl diphosphate (GPP) to (1S,5S)-beta-pinene. This chain is (-)-alpha-pinene synthase 1, chloroplastic, found in Picea sitchensis (Sitka spruce).